The sequence spans 181 residues: Protein Syd (181 aa).

Belongs to the Syd family.

The protein resides in the cell inner membrane. Its function is as follows. Interacts with the SecY protein in vivo. May bind preferentially to an uncomplexed state of SecY, thus functioning either as a chelating agent for excess SecY in the cell or as a regulatory factor that negatively controls the translocase function. The polypeptide is Protein Syd (Cronobacter sakazakii (strain ATCC BAA-894) (Enterobacter sakazakii)).